We begin with the raw amino-acid sequence, 331 residues long: Holliday junction branch migration complex subunit RuvB (331 aa).

A large ATPase domain (RuvB-L) region spans residues 1–171 (MTEPLDAALR…FGIIEHLEYY (171 aa)). ATP is bound by residues leucine 9, arginine 10, glycine 51, lysine 54, threonine 55, threonine 56, 118 to 120 (EDF), arginine 161, tyrosine 171, and arginine 208. Threonine 55 is a Mg(2+) binding site. Residues 172–242 (TPEEIGTNLL…RAQDALDKLG (71 aa)) are small ATPAse domain (RuvB-S). The segment at 245–331 (TAGLDERDKK…AESDLGLYTN (87 aa)) is head domain (RuvB-H). Positions 300 and 305 each coordinate DNA.

It belongs to the RuvB family. In terms of assembly, homohexamer. Forms an RuvA(8)-RuvB(12)-Holliday junction (HJ) complex. HJ DNA is sandwiched between 2 RuvA tetramers; dsDNA enters through RuvA and exits via RuvB. An RuvB hexamer assembles on each DNA strand where it exits the tetramer. Each RuvB hexamer is contacted by two RuvA subunits (via domain III) on 2 adjacent RuvB subunits; this complex drives branch migration. In the full resolvosome a probable DNA-RuvA(4)-RuvB(12)-RuvC(2) complex forms which resolves the HJ.

The protein localises to the cytoplasm. The enzyme catalyses ATP + H2O = ADP + phosphate + H(+). Its function is as follows. The RuvA-RuvB-RuvC complex processes Holliday junction (HJ) DNA during genetic recombination and DNA repair, while the RuvA-RuvB complex plays an important role in the rescue of blocked DNA replication forks via replication fork reversal (RFR). RuvA specifically binds to HJ cruciform DNA, conferring on it an open structure. The RuvB hexamer acts as an ATP-dependent pump, pulling dsDNA into and through the RuvAB complex. RuvB forms 2 homohexamers on either side of HJ DNA bound by 1 or 2 RuvA tetramers; 4 subunits per hexamer contact DNA at a time. Coordinated motions by a converter formed by DNA-disengaged RuvB subunits stimulates ATP hydrolysis and nucleotide exchange. Immobilization of the converter enables RuvB to convert the ATP-contained energy into a lever motion, pulling 2 nucleotides of DNA out of the RuvA tetramer per ATP hydrolyzed, thus driving DNA branch migration. The RuvB motors rotate together with the DNA substrate, which together with the progressing nucleotide cycle form the mechanistic basis for DNA recombination by continuous HJ branch migration. Branch migration allows RuvC to scan DNA until it finds its consensus sequence, where it cleaves and resolves cruciform DNA. This chain is Holliday junction branch migration complex subunit RuvB, found in Deinococcus geothermalis (strain DSM 11300 / CIP 105573 / AG-3a).